Consider the following 702-residue polypeptide: Transposon Tn7 transposition protein TnsB (702 aa).

The tract at residues 1 to 139 (MWQINEVVLF…GQTPNALIPD (139 aa)) is DNA-binding domain 1 (DBD1). The H-T-H motif DNA-binding region spans 105–124 (VEHVVQEHKVTKATVYKLLR). Residues 137–160 (IPDYKNSGAPGERRSATGTAKIGR) form a disordered region. Positions 140–172 (YKNSGAPGERRSATGTAKIGRAREYGKGEGTKV) are linker 1. The DNA-binding domain 2 (DBD2) stretch occupies residues 173–233 (TPEIERLFRL…QFRYFYDREY (61 aa)). Residues 234-267 (PKAQRLKSRVKAGVYKKDVRPLSSTATSQALGPG) form a linker 2 region. The Integrase catalytic domain maps to 262–480 (QALGPGSRYE…IPVQLWQWGM (219 aa)). Positions 268-582 (SRYEIDATIA…RSRQFKGLSF (315 aa)) are catalytic domain (CD). Residues 589–702 (QAQEKHNKAN…FQDPPEKDES (114 aa)) are C-terminal domain. Positions 623–702 (KLTPSTTEPK…FQDPPEKDES (80 aa)) are disordered.

Heteromer with TnsA.

Sequence-specific, DNA-binding protein required for Tn7 transposition. Recognizes sequences necessary for recombination at both left and right ends of Tn7 and, together with TnsA, forms the transposase. TnsB executes the 3'-DNA strand breakage and joining reactions. TnsB binding introduces DNA bending. There are 3 DNA-binding sites in the left and 4 in the right end of Tn7; as TnsB levels increase more TnsB is bound, suggesting high protein levels contribute to transposon immunity. Binding of TnsB to the transposon right end represses expression of the downstream transposition genes. TnsABC + TnsD promote high-frequency insertion of Tn7 into a specific target site known as att-Tn7 whereas TnsABC + TnsE promote low-frequency insertion into many different sites. In Escherichia coli, this protein is Transposon Tn7 transposition protein TnsB.